Reading from the N-terminus, the 327-residue chain is Protoheme IX farnesyltransferase (327 aa).

Transmembrane regions (helical) follow at residues 55 to 75, 101 to 121, 124 to 144, 152 to 172, 180 to 200, 237 to 257, and 278 to 298; these read LVCTLGGGALAAAAAGVLNCL, AAFVGAVSCTLAAAALLVSGV, LAAGLSLLGLCSYVLLYTALL, IVVGGVAGAIPPLVGAAAATG, WLFALVMVWTPAHFWALALLL, FLGIWALPEGGALYGLLILPF, and AKGLFRWSILYLFGVCLLLVM.

Belongs to the UbiA prenyltransferase family. Protoheme IX farnesyltransferase subfamily.

Its subcellular location is the cell inner membrane. The catalysed reaction is heme b + (2E,6E)-farnesyl diphosphate + H2O = Fe(II)-heme o + diphosphate. It functions in the pathway porphyrin-containing compound metabolism; heme O biosynthesis; heme O from protoheme: step 1/1. Converts heme B (protoheme IX) to heme O by substitution of the vinyl group on carbon 2 of heme B porphyrin ring with a hydroxyethyl farnesyl side group. The sequence is that of Protoheme IX farnesyltransferase from Synechococcus sp. (strain CC9311).